A 351-amino-acid chain; its full sequence is C(7)-cyclitol 7-kinase (351 aa).

It belongs to the ROK (NagC/XylR) family.

The enzyme catalyses valienone + ATP = valienone 7-phosphate + ADP + H(+). The catalysed reaction is validone + ATP = validone 7-phosphate + ADP + H(+). Functionally, involved in the biosynthesis of the antifungal agent validamycin A. Catalyzes the phosphorylation of valienone and validone to their 7-phosphate derivatives. The protein is C(7)-cyclitol 7-kinase of Streptomyces hygroscopicus subsp. jinggangensis (strain 5008).